The primary structure comprises 563 residues: Delta-1-pyrroline-5-carboxylate dehydrogenase, mitochondrial (563 aa).

A mitochondrion-targeting transit peptide spans 1–24 (MLLRSAALCRALLARRGRAAGLCR). Position 44 is a phosphoserine (serine 44). Lysine 52 carries the post-translational modification N6-acetyllysine. Lysine 93, lysine 99, lysine 114, lysine 130, and lysine 175 each carry N6-acetyllysine; alternate. An N6-succinyllysine; alternate mark is found at lysine 93, lysine 99, lysine 114, lysine 130, and lysine 175. Residues serine 208, lysine 233, and 286 to 290 (GSVPT) each bind NAD(+). Glutamate 314 serves as the catalytic Proton acceptor. The residue at position 318 (lysine 318) is an N6-acetyllysine. Lysine 347 is subject to N6-succinyllysine. The active-site Nucleophile is the cysteine 348. N6-acetyllysine occurs at positions 365 and 376. Lysine 395 carries the post-translational modification N6-succinyllysine. Glutamate 447 serves as a coordination point for NAD(+). Position 509 is an N6-acetyllysine; alternate (lysine 509). The residue at position 509 (lysine 509) is an N6-succinyllysine; alternate. Serine 513 contacts substrate. Lysine 531 is subject to N6-acetyllysine.

The protein belongs to the aldehyde dehydrogenase family. As to quaternary structure, homodimer.

It is found in the mitochondrion matrix. It catalyses the reaction L-glutamate 5-semialdehyde + NAD(+) + H2O = L-glutamate + NADH + 2 H(+). It participates in amino-acid degradation; L-proline degradation into L-glutamate; L-glutamate from L-proline: step 2/2. Functionally, irreversible conversion of delta-1-pyrroline-5-carboxylate (P5C), derived either from proline or ornithine, to glutamate. This is a necessary step in the pathway interconnecting the urea and tricarboxylic acid cycles. The preferred substrate is glutamic gamma-semialdehyde, other substrates include succinic, glutaric and adipic semialdehydes. The sequence is that of Delta-1-pyrroline-5-carboxylate dehydrogenase, mitochondrial (ALDH4A1) from Bos taurus (Bovine).